The chain runs to 330 residues: tRNA U34 carboxymethyltransferase (330 aa).

Residues Lys91, Trp105, Lys110, Gly130, Asp152–Ser154, Ile181–Glu182, Met196, Tyr200, and Arg315 each bind carboxy-S-adenosyl-L-methionine.

It belongs to the class I-like SAM-binding methyltransferase superfamily. CmoB family. As to quaternary structure, homotetramer.

It carries out the reaction carboxy-S-adenosyl-L-methionine + 5-hydroxyuridine(34) in tRNA = 5-carboxymethoxyuridine(34) in tRNA + S-adenosyl-L-homocysteine + H(+). Functionally, catalyzes carboxymethyl transfer from carboxy-S-adenosyl-L-methionine (Cx-SAM) to 5-hydroxyuridine (ho5U) to form 5-carboxymethoxyuridine (cmo5U) at position 34 in tRNAs. The protein is tRNA U34 carboxymethyltransferase of Shewanella frigidimarina (strain NCIMB 400).